The chain runs to 923 residues: ATP-dependent Clp protease ATP-binding subunit ClpA homolog CD4B, chloroplastic (923 aa).

Residues 92–234 enclose the Clp R domain; the sequence is FERFTEKAIK…RTQVIRMVGE (143 aa). Repeat stretches follow at residues 95–160 and 170–234; these read FTEK…IGRG and FTPR…MVGE. Residues 255 to 502 form an i region; sequence LEEYGTNLTK…RVRLRHAQLP (248 aa). Residue 300 to 307 participates in ATP binding; it reads GEPGVGKT. A UVR domain is found at 509–544; that stretch reads EKELRQITKEKNEAVRGQDFEKAGELRDREMDLKAQ. Positions 569–760 are II; that stretch reads VTEADIQHIV…LLIMTSNVGS (192 aa). An ATP-binding site is contributed by 643 to 650; sequence GPTGVGKS.

Belongs to the ClpA/ClpB family.

Its subcellular location is the plastid. It is found in the chloroplast. Its function is as follows. May interact with a ClpP-like protease involved in degradation of denatured proteins in the chloroplast. The chain is ATP-dependent Clp protease ATP-binding subunit ClpA homolog CD4B, chloroplastic (CD4B) from Solanum lycopersicum (Tomato).